Reading from the N-terminus, the 351-residue chain is Autoinducer 2 import system permease protein LsrC (351 aa).

The next 9 membrane-spanning stretches (helical) occupy residues 14 to 34 (LLAI…YFSL), 39 to 59 (MIFS…LVML), 70 to 90 (ITGL…GLVA), 93 to 113 (LFAL…VTWL), 115 to 135 (IPAI…MLLL), 155 to 175 (ILFS…SMAW), 213 to 233 (MNGV…GFIP), 252 to 272 (GISL…AFLL), and 284 to 304 (LPAW…LVFD).

This sequence belongs to the binding-protein-dependent transport system permease family. AraH/RbsC subfamily. As to quaternary structure, the complex is composed of two ATP-binding proteins (LsrA), two transmembrane proteins (LsrC and LsrD) and a solute-binding protein (LsrB).

Its subcellular location is the cell inner membrane. Its function is as follows. Part of the ABC transporter complex LsrABCD involved in autoinducer 2 (AI-2) import. Probably responsible for the translocation of the substrate across the membrane. The protein is Autoinducer 2 import system permease protein LsrC (lsrC) of Yersinia pseudotuberculosis serotype IB (strain PB1/+).